Reading from the N-terminus, the 365-residue chain is Probable dual-specificity RNA methyltransferase RlmN (365 aa).

The Proton acceptor role is filled by E111. The 235-residue stretch at 117 to 351 folds into the Radical SAM core domain; it reads ADDRMTACIS…VNIRRSRGKD (235 aa). C124 and C356 form a disulfide bridge. [4Fe-4S] cluster contacts are provided by C131, C135, and C138. Residues 182–183, S214, 237–239, and N313 each bind S-adenosyl-L-methionine; these read GE and SLH. C356 serves as the catalytic S-methylcysteine intermediate.

It belongs to the radical SAM superfamily. RlmN family. Requires [4Fe-4S] cluster as cofactor.

Its subcellular location is the cytoplasm. The catalysed reaction is adenosine(2503) in 23S rRNA + 2 reduced [2Fe-2S]-[ferredoxin] + 2 S-adenosyl-L-methionine = 2-methyladenosine(2503) in 23S rRNA + 5'-deoxyadenosine + L-methionine + 2 oxidized [2Fe-2S]-[ferredoxin] + S-adenosyl-L-homocysteine. It carries out the reaction adenosine(37) in tRNA + 2 reduced [2Fe-2S]-[ferredoxin] + 2 S-adenosyl-L-methionine = 2-methyladenosine(37) in tRNA + 5'-deoxyadenosine + L-methionine + 2 oxidized [2Fe-2S]-[ferredoxin] + S-adenosyl-L-homocysteine. Functionally, specifically methylates position 2 of adenine 2503 in 23S rRNA and position 2 of adenine 37 in tRNAs. In Cytophaga hutchinsonii (strain ATCC 33406 / DSM 1761 / CIP 103989 / NBRC 15051 / NCIMB 9469 / D465), this protein is Probable dual-specificity RNA methyltransferase RlmN.